A 657-amino-acid chain; its full sequence is Glycogen debranching enzyme (657 aa).

The active-site Nucleophile is Asp-336. The Proton donor role is filled by Glu-371. Residues 460–479 are disordered; the sequence is ANGEENRDGTNNNYSNNHGK.

Belongs to the glycosyl hydrolase 13 family.

It carries out the reaction Hydrolysis of (1-&gt;6)-alpha-D-glucosidic linkages to branches with degrees of polymerization of three or four glucose residues in limit dextrin.. The protein operates within glycan degradation; glycogen degradation. Its function is as follows. Removes maltotriose and maltotetraose chains that are attached by 1,6-alpha-linkage to the limit dextrin main chain, generating a debranched limit dextrin. This is Glycogen debranching enzyme from Escherichia coli (strain SMS-3-5 / SECEC).